The following is a 437-amino-acid chain: Sorting nexin-30 (437 aa).

The disordered stretch occupies residues 1 to 45 (MAGGPPKALPSTGPQSLRDMPHPLAGSSSEEAVGGDSTPSPDLLM). A Phosphothreonine modification is found at T38. Residue S40 is modified to Phosphoserine. In terms of domain architecture, PX spans 89-210 (RDLFVTVDDP…VFLTAKDLNA (122 aa)). A 1,2-diacyl-sn-glycero-3-phospho-(1D-myo-inositol-3-phosphate) contacts are provided by R132, Q134, K162, and R176. Positions 234–437 (KLRSRPLEFA…PLLQEKQETK (204 aa)) constitute a BAR domain.

Belongs to the sorting nexin family. Heterodimer; heterodimerizes with SNX4.

It localises to the early endosome membrane. Involved in the regulation of endocytosis and in several stages of intracellular trafficking. Together with SNX4, involved in autophagosome assembly. This chain is Sorting nexin-30, found in Mus musculus (Mouse).